We begin with the raw amino-acid sequence, 111 residues long: Putative pterin-4-alpha-carbinolamine dehydratase (111 aa).

Belongs to the pterin-4-alpha-carbinolamine dehydratase family.

The catalysed reaction is (4aS,6R)-4a-hydroxy-L-erythro-5,6,7,8-tetrahydrobiopterin = (6R)-L-erythro-6,7-dihydrobiopterin + H2O. This chain is Putative pterin-4-alpha-carbinolamine dehydratase, found in Chlorobaculum tepidum (strain ATCC 49652 / DSM 12025 / NBRC 103806 / TLS) (Chlorobium tepidum).